A 197-amino-acid chain; its full sequence is C-type lectin domain family 3 member A (197 aa).

A signal peptide spans 1–24; that stretch reads MAKNGLVIYILVITLLLDQTSCHA. Intrachain disulfides connect C68–C78, C95–C191, and C167–C183. Positions 74–192 constitute a C-type lectin domain; that stretch reads FHKKCYLAAE…CHSSKRYICE (119 aa).

It localises to the secreted. Its function is as follows. Promotes cell adhesion to laminin and fibronectin. The sequence is that of C-type lectin domain family 3 member A (CLEC3A) from Bos taurus (Bovine).